The following is a 307-amino-acid chain: UPF0276 protein PM0211 (307 aa).

Belongs to the UPF0276 family.

This chain is UPF0276 protein PM0211, found in Pasteurella multocida (strain Pm70).